Consider the following 401-residue polypeptide: Glucose-6-phosphate isomerase (401 aa).

Glutamate 261 (proton donor) is an active-site residue. Catalysis depends on residues histidine 282 and lysine 392.

The protein belongs to the GPI family. Homodimer.

It is found in the cytoplasm. It catalyses the reaction alpha-D-glucose 6-phosphate = beta-D-fructose 6-phosphate. It participates in carbohydrate biosynthesis; gluconeogenesis. Its pathway is carbohydrate degradation; glycolysis; D-glyceraldehyde 3-phosphate and glycerone phosphate from D-glucose: step 2/4. Competively inhibited by 6-phosphogluconate and erythrose 4-phosphate. In terms of biological role, catalyzes the isomerization of glucose-6-P to fructose-6-P. This Methanocaldococcus jannaschii (strain ATCC 43067 / DSM 2661 / JAL-1 / JCM 10045 / NBRC 100440) (Methanococcus jannaschii) protein is Glucose-6-phosphate isomerase.